A 167-amino-acid chain; its full sequence is Phospholipase A2 inhibitor alpha-like protein (167 aa).

The N-terminal stretch at 1–19 (MQLILLSSLLLLGLSLANG) is a signal peptide. The region spanning 62–163 (GSERLYVTNK…CDEDLLVVCE (102 aa)) is the C-type lectin domain. 2 cysteine pairs are disulfide-bonded: C83–C162 and C140–C154.

This sequence belongs to the alpha-type phospholipase A2 inhibitor family. Homotrimer.

The protein localises to the secreted. Has no PLA2 inhibitory activity. The sequence is that of Phospholipase A2 inhibitor alpha-like protein from Elaphe climacophora (Japanese rat snake).